The following is a 287-amino-acid chain: X-box-binding protein 1 (287 aa).

Positions 61-117 constitute a bZIP domain; sequence EEKMDRRKLKNRVAAQNARDKKKERSAKIEDVMRDLVEENRRLRAENERLRRQNKNL. The interval 63–87 is disordered; the sequence is KMDRRKLKNRVAAQNARDKKKERSA. Residues 63–88 form a basic motif region; sequence KMDRRKLKNRVAAQNARDKKKERSAK. The span at 78 to 87 shows a compositional bias: basic and acidic residues; that stretch reads ARDKKKERSA. Positions 89-117 are leucine-zipper; it reads IEDVMRDLVEENRRLRAENERLRRQNKNL.

Interacts with SUMO-conjugating enzyme ubc-9; the interaction is direct. Sumoylated. Sumoylation may negatively modulate the transcription of genes involved in the ER-stress-response.

Its subcellular location is the nucleus. Required for transcriptional regulation of the unfolded protein response (UPR) in the endoplasmic reticulum (ER) under stressed conditions, acting downstream of ire-1, and also maintaining ER homeostasis via a negative feedback loop, in parallel with ER kinase pek-1. May also regulate Golgi protein trafficking distal to the ER. Protects the host organism from the detrimental effects of mounting an innate immune response to microbes, such as the Gram-negative bacterium P.aeruginosa, probably by modulating the UPR. In terms of biological role, plays a role in the unconventional cytoplasmic splicing processing of its own mRNA triggered by the endoplasmic reticulum (ER) transmembrane endoribonuclease ire-1: upon ER stress, the emerging xbp-1 polypeptide chain, as part of a mRNA-ribosome-nascent chain (R-RNC) complex, cotranslationally recruits its own unprocessed mRNA through transient docking to the ER membrane and translational pausing, therefore facilitating efficient ire-1-mediated xbp-1 mRNA isoform 2 production. Functionally, functions as a stress-inducible potent transcriptional activator during endoplasmic reticulum (ER) stress by inducing unfolded protein response (UPR) target genes via binding to the UPR element (UPRE). Plays a role in modulation of the UPR, lipid metabolism, proteostasis, and lifespan. In neurons, rescues stress resistance, increases longevity, and, drives expression of lysosomal genes in the intestine and activates the UPR in distal, non-neuronal cell types through a cell-nonautonomous mechanism. In neurons or intestine, plays a role in protection against proteotoxicity, acting via positive modulation of genes involved in lysosomal function, including lipases and the fatty-acid desaturase fat-6. Protection against proteotoxicity in neurons is dependent upon the transcription factor atf-6. The polypeptide is X-box-binding protein 1 (Caenorhabditis elegans).